We begin with the raw amino-acid sequence, 1144 residues long: Guanine nucleotide-binding protein G(s) subunit alpha isoforms XLas (1144 aa).

Disordered stretches follow at residues 1 to 186 (MGML…LAPG), 316 to 558 (DDDT…PAAG), 622 to 657 (SASA…SAWP), and 735 to 772 (RSRS…DKKR). A compositionally biased stretch (low complexity) spans 31–46 (LEAQGAAAPGAGVGPA). Over residues 343-356 (KSEHAKRPPLERQA) the composition is skewed to basic and acidic residues. The segment covering 358–369 (ETGNSPISSTTA) has biased composition (polar residues). Positions 370–381 (EEAKVPSLERGE) are enriched in basic and acidic residues. Composition is skewed to low complexity over residues 467 to 499 (PAAA…AAEA) and 518 to 558 (EPAA…PAAG). Pro residues predominate over residues 644-654 (PPTPRPAPRPS). The span at 743–767 (KAKDPMEERRKQMRKEAMEMREQKR) shows a compositional bias: basic and acidic residues. Positions 745–772 (KDPMEERRKQMRKEAMEMREQKRADKKR) form a coiled coil. In terms of domain architecture, G-alpha spans 789-1144 (CTHRLLLLGA…RMHLRQYELL (356 aa)). The segment at 792 to 805 (RLLLLGAGESGKST) is G1 motif. Residue 797–805 (GAGESGKST) coordinates GTP. Serine 804 is a binding site for Mg(2+). Residues 818-840 (FNGEGGEEDPQAARSNSDGEKAT) are disordered. Positions 837–863 (EKATKVQDIKNNLKEAIETIVAAMSNL) form a coiled coil. Residues 946–954 (DLPRCRVLT) are G2 motif. GTP is bound by residues 947–954 (LPRCRVLT), 973–977 (DVGGQ), and 1042–1045 (NKQD). The residue at position 951 (arginine 951) is an ADP-ribosylarginine; by cholera toxin. Threonine 954 contacts Mg(2+). The segment at 969-978 (FHMFDVGGQR) is G3 motif. The tract at residues 1038-1045 (ILFLNKQD) is G4 motif. Serine 1102 carries the phosphoserine modification. Residues 1114 to 1119 (TCAVDT) form a G5 motif region. Alanine 1116 is a binding site for GTP.

This sequence belongs to the G-alpha family. G(s) subfamily. In terms of assembly, g proteins are composed of 3 units; alpha, beta and gamma. The alpha chain contains the guanine nucleotide binding site. Interacts through its N-terminal region with ALEX which is produced from the same locus in a different open reading frame. This interaction may inhibit its adenylyl cyclase-stimulating activity. Interacts with MAGED2. In terms of tissue distribution, enriched in neuroendocrine tissues with a particularly high level of expression in pituitary where it is abundant in intermediate and anterior lobes. In adrenal gland, found in central region containing medullary chromaffin cells but not in cortex. In cerebellum, strongly expressed in perikarya of Purkinje cells. Not detected in liver, kidney or neurohypophysis.

The protein resides in the cell membrane. Its subcellular location is the apical cell membrane. Guanine nucleotide-binding proteins (G proteins) function as transducers in numerous signaling pathways controlled by G protein-coupled receptors (GPCRs). Signaling involves the activation of adenylyl cyclases, resulting in increased levels of the signaling molecule cAMP. GNAS functions downstream of several GPCRs, including beta-adrenergic receptors. XLas isoforms interact with the same set of receptors as Gnas isoforms. This Rattus norvegicus (Rat) protein is Guanine nucleotide-binding protein G(s) subunit alpha isoforms XLas.